The sequence spans 244 residues: ATP synthase subunit b 2 (244 aa).

Residues 2-22 (LIDWFTIVAQIINFLILVFLL) traverse the membrane as a helical segment.

This sequence belongs to the ATPase B chain family. As to quaternary structure, F-type ATPases have 2 components, F(1) - the catalytic core - and F(0) - the membrane proton channel. F(1) has five subunits: alpha(3), beta(3), gamma(1), delta(1), epsilon(1). F(0) has four main subunits: a(1), b(1), b'(1) and c(10-14). The alpha and beta chains form an alternating ring which encloses part of the gamma chain. F(1) is attached to F(0) by a central stalk formed by the gamma and epsilon chains, while a peripheral stalk is formed by the delta, b and b' chains.

The protein localises to the cellular thylakoid membrane. In terms of biological role, f(1)F(0) ATP synthase produces ATP from ADP in the presence of a proton or sodium gradient. F-type ATPases consist of two structural domains, F(1) containing the extramembraneous catalytic core and F(0) containing the membrane proton channel, linked together by a central stalk and a peripheral stalk. During catalysis, ATP synthesis in the catalytic domain of F(1) is coupled via a rotary mechanism of the central stalk subunits to proton translocation. Component of the F(0) channel, it forms part of the peripheral stalk, linking F(1) to F(0). The sequence is that of ATP synthase subunit b 2 from Crocosphaera subtropica (strain ATCC 51142 / BH68) (Cyanothece sp. (strain ATCC 51142)).